A 196-amino-acid polypeptide reads, in one-letter code: Protein GrpE (196 aa).

The tract at residues 1 to 39 is disordered; that stretch reads MSSKEQKTPEGQAPEEIIMDQHEEIEAVEPEASAEQVDP.

The protein belongs to the GrpE family. Homodimer.

Its subcellular location is the cytoplasm. Functionally, participates actively in the response to hyperosmotic and heat shock by preventing the aggregation of stress-denatured proteins, in association with DnaK and GrpE. It is the nucleotide exchange factor for DnaK and may function as a thermosensor. Unfolded proteins bind initially to DnaJ; upon interaction with the DnaJ-bound protein, DnaK hydrolyzes its bound ATP, resulting in the formation of a stable complex. GrpE releases ADP from DnaK; ATP binding to DnaK triggers the release of the substrate protein, thus completing the reaction cycle. Several rounds of ATP-dependent interactions between DnaJ, DnaK and GrpE are required for fully efficient folding. This is Protein GrpE from Escherichia coli (strain SMS-3-5 / SECEC).